The primary structure comprises 352 residues: Heat-inducible transcription repressor HrcA (352 aa).

It belongs to the HrcA family.

Negative regulator of class I heat shock genes (grpE-dnaK-dnaJ and groELS operons). Prevents heat-shock induction of these operons. The sequence is that of Heat-inducible transcription repressor HrcA from Lactobacillus gasseri (strain ATCC 33323 / DSM 20243 / BCRC 14619 / CIP 102991 / JCM 1131 / KCTC 3163 / NCIMB 11718 / NCTC 13722 / AM63).